Here is a 315-residue protein sequence, read N- to C-terminus: tRNA-dihydrouridine(16) synthase (315 aa).

FMN-binding positions include 7-9 (PME) and Gln68. Cys98 functions as the Proton donor in the catalytic mechanism. FMN contacts are provided by residues Lys139, 200–202 (NGE), and 224–225 (GR).

This sequence belongs to the Dus family. DusC subfamily. The cofactor is FMN.

It catalyses the reaction 5,6-dihydrouridine(16) in tRNA + NADP(+) = uridine(16) in tRNA + NADPH + H(+). The catalysed reaction is 5,6-dihydrouridine(16) in tRNA + NAD(+) = uridine(16) in tRNA + NADH + H(+). In terms of biological role, catalyzes the synthesis of 5,6-dihydrouridine (D), a modified base found in the D-loop of most tRNAs, via the reduction of the C5-C6 double bond in target uridines. DusC specifically modifies U16 in tRNAs. The chain is tRNA-dihydrouridine(16) synthase from Escherichia coli (strain K12).